Here is a 150-residue protein sequence, read N- to C-terminus: S-protein homolog 24 (150 aa).

Asn122 is a glycosylation site (N-linked (GlcNAc...) asparagine).

The protein belongs to the plant self-incompatibility (S1) protein family.

It is found in the secreted. The chain is S-protein homolog 24 from Arabidopsis thaliana (Mouse-ear cress).